The following is a 487-amino-acid chain: Cytochrome P450 2C4 (487 aa).

Residue Cys-432 participates in heme binding.

Belongs to the cytochrome P450 family. Heme serves as cofactor.

The protein localises to the endoplasmic reticulum membrane. It localises to the microsome membrane. The catalysed reaction is an organic molecule + reduced [NADPH--hemoprotein reductase] + O2 = an alcohol + oxidized [NADPH--hemoprotein reductase] + H2O + H(+). Its function is as follows. Cytochromes P450 are a group of heme-thiolate monooxygenases. In liver microsomes, this enzyme is involved in an NADPH-dependent electron transport pathway. It oxidizes a variety of structurally unrelated compounds, including steroids, fatty acids, and xenobiotics. The chain is Cytochrome P450 2C4 (CYP2C4) from Oryctolagus cuniculus (Rabbit).